The primary structure comprises 346 residues: Biotin synthase (346 aa).

The Radical SAM core domain maps to 38–256 (KQIQVSTLLS…IAVARIMMPT (219 aa)). Cys53, Cys57, and Cys60 together coordinate [4Fe-4S] cluster. Positions 97, 128, 188, and 260 each coordinate [2Fe-2S] cluster.

Belongs to the radical SAM superfamily. Biotin synthase family. In terms of assembly, homodimer. It depends on [4Fe-4S] cluster as a cofactor. [2Fe-2S] cluster serves as cofactor.

It catalyses the reaction (4R,5S)-dethiobiotin + (sulfur carrier)-SH + 2 reduced [2Fe-2S]-[ferredoxin] + 2 S-adenosyl-L-methionine = (sulfur carrier)-H + biotin + 2 5'-deoxyadenosine + 2 L-methionine + 2 oxidized [2Fe-2S]-[ferredoxin]. It functions in the pathway cofactor biosynthesis; biotin biosynthesis; biotin from 7,8-diaminononanoate: step 2/2. In terms of biological role, catalyzes the conversion of dethiobiotin (DTB) to biotin by the insertion of a sulfur atom into dethiobiotin via a radical-based mechanism. The protein is Biotin synthase of Salmonella arizonae (strain ATCC BAA-731 / CDC346-86 / RSK2980).